The primary structure comprises 429 residues: MQLLAVGLNHTTAPVSLREKVAFPADQLGQAVASARVWYGRSDSKTYSDEAAILSTCNRTELYAASHQPGGVNEAIDLTAHFLADYHKLPYSELRPYLYALPQDNAVRHAFRVASGLDSMVLGEPQILGQMKDAVRQAEAAGGLGTYLHQMFQRTFAVAKEVRSNTEIGAHSVSMAAASVRLSQRIFDTISEQNVLFIGAGEMIELCATHFAAQNPKSLTIANRTLERGETLAHRFNGRAIRLADLPDQLASYDIVISSTASSLPIIGLGMVERAIKARRHKPMFMVDLAVPRDIETEIGRLDDVFLYTVDDLGTFVQTGLENRQAAVTQAEAIIETRVQSFMHWIDARAVVPVIQDLHESSEMMRMIELERARKLLAKGEDIDAVLEALSKGLTAKFLHGPQQALNNAQGDERTRLAALLPQLFRTKR.

Substrate is bound by residues 56-59 (TCNR), S119, 124-126 (EPQ), and Q130. C57 serves as the catalytic Nucleophile. 199–204 (GAGEMI) serves as a coordination point for NADP(+).

It belongs to the glutamyl-tRNA reductase family. As to quaternary structure, homodimer.

It catalyses the reaction (S)-4-amino-5-oxopentanoate + tRNA(Glu) + NADP(+) = L-glutamyl-tRNA(Glu) + NADPH + H(+). It functions in the pathway porphyrin-containing compound metabolism; protoporphyrin-IX biosynthesis; 5-aminolevulinate from L-glutamyl-tRNA(Glu): step 1/2. Catalyzes the NADPH-dependent reduction of glutamyl-tRNA(Glu) to glutamate 1-semialdehyde (GSA). The protein is Glutamyl-tRNA reductase of Herminiimonas arsenicoxydans.